The chain runs to 357 residues: MLDHITPFFALVAFFLVLMPFAWHIKSKNVGLIMLSIWLMLGNLDNFVNSMVWWKTTADLAPAYCELSVRLRHLLFIAIPASNLAIARKLESIASTRQVRAGPGDHRRAVIIDLLICLGIPIIYTSLMIVNQSNRYGILEEAGCWPMMVFSWLWVLLVAAPVIVVSLCSAVYSALAFRWFWVRRRQFQAVLASSASTINRSHYVRLLLLTAIDMLLFFPIYVGTIAAQIKSSISIPYGSWSSVHTGFNQIPQYPASLVLMENTFQRNLILARLVCPLSAYIFFAMFGLGLEVRQGYKEAFHRALLFCRLRKEPKASALQHVVADIEVVTFRSHDTFDANTSTKSEKSDIDMRGSEAA.

7 helical membrane-spanning segments follow: residues 5 to 25 (ITPF…AWHI), 32 to 52 (LIML…NSMV), 67 to 90 (LSVR…ARKL), 110 to 130 (VIID…LMIV), 145 to 165 (WPMM…VIVV), 206 to 226 (LLLL…GTIA), and 268 to 288 (LILA…MFGL). The disordered stretch occupies residues 338–357 (ANTSTKSEKSDIDMRGSEAA). The segment covering 343 to 357 (KSEKSDIDMRGSEAA) has biased composition (basic and acidic residues).

The protein belongs to the G-protein coupled receptor 4 family.

It localises to the membrane. Its function is as follows. Receptor for the A2 pheromone, a prenylated mating factor. In Mycosarcoma maydis (Corn smut fungus), this protein is Pheromone receptor 1 (PRA1).